Reading from the N-terminus, the 314-residue chain is Ketimine reductase mu-crystallin (314 aa).

Arginine 47 contributes to the 3,3',5-triiodo-L-thyronine binding site. Residues serine 91, histidine 92, arginine 119, alanine 144, valine 146, glutamine 147, asparagine 168, arginine 169, threonine 170, asparagine 173, threonine 205, methionine 206, and valine 226 each contribute to the NADPH site. Residue glutamate 257 coordinates 3,3',5-triiodo-L-thyronine. Residue serine 292 coordinates NADPH.

Belongs to the ornithine cyclodeaminase/mu-crystallin family. As to quaternary structure, homodimer. Binds the thyroid hormone triiodothyronine (T3); T3 binding inhibits enzymatic activity. As to expression, expressed at high abundance in lens, but outside the lens it is preferentially expressed in neural tissues, retina and brain.

The protein resides in the cytoplasm. It carries out the reaction L-pipecolate + NADP(+) = Delta(1)-piperideine-2-carboxylate + NADPH + H(+). It catalyses the reaction L-pipecolate + NAD(+) = Delta(1)-piperideine-2-carboxylate + NADH + H(+). The catalysed reaction is L-proline + NADP(+) = 1-pyrroline-2-carboxylate + NADPH + H(+). The enzyme catalyses L-proline + NAD(+) = 1-pyrroline-2-carboxylate + NADH + H(+). It carries out the reaction (3R)-1,4-thiomorpholine-3-carboxylate + NAD(+) = 3,4-dehydrothiomorpholine-3-carboxylate + NADH + 2 H(+). It catalyses the reaction (3R)-1,4-thiomorpholine-3-carboxylate + NADP(+) = 3,4-dehydrothiomorpholine-3-carboxylate + NADPH + 2 H(+). The catalysed reaction is (S)-cystathionine ketimine + NADH + 2 H(+) = (3R,5S)-2,3,5,6,7-pentahydro-1,4-thiazepine-3,5-dicarboxylate + NAD(+). The enzyme catalyses (S)-cystathionine ketimine + NADPH + 2 H(+) = (3R,5S)-2,3,5,6,7-pentahydro-1,4-thiazepine-3,5-dicarboxylate + NADP(+). It carries out the reaction (R)-lanthionine ketimine + NADPH + 2 H(+) = (3R,5R)-1,4-thiomorpholine-3,5-dicarboxylate + NADP(+). It catalyses the reaction Delta(2)-thiazoline-2-carboxylate + NADPH + 2 H(+) = L-thiazolidine-2-carboxylate + NADP(+). Functionally, catalyzes the NAD(P)H-dependent reduction of imine double bonds of a number of cyclic ketimine substrates, including sulfur-containing cyclic ketimines. Under physiological conditions, it efficiently catalyzes delta(1)-piperideine-2-carboxylate (P2C) and delta(1)-pyrroline-2-carboxylate (Pyr2C) reduction, suggesting a central role in lysine and glutamate metabolism. Additional substrates are delta(2)-thiazoline-2-carboxylate (T2C), 3,4-dehydrothiomorpholine-3-carboxylate (AECK), and (R)-lanthionine ketimine (LK) that is reduced at very low rate compared to other substrates. Also catalyzes the NAD(P)H-dependent reduction of (S)-cystathionine ketimine (CysK). The chain is Ketimine reductase mu-crystallin (CRYM) from Macropus fuliginosus (Western gray kangaroo).